Reading from the N-terminus, the 407-residue chain is Resuscitation-promoting factor RpfA (407 aa).

The N-terminal stretch at methionine 1–alanine 33 is a signal peptide. 2 disordered regions span residues valine 142–alanine 253 and leucine 271–proline 371. Residues proline 148–proline 159 are compositionally biased toward pro residues. The span at valine 160–proline 170 shows a compositional bias: low complexity. The segment covering leucine 171–proline 193 has biased composition (pro residues). 2 repeat units span residues alanine 178–proline 185 and alanine 186–proline 193. Positions alanine 178 to proline 359 are 12 X 8 AA approximate repeats of A-P-A-D-L-A-P-P. A compositionally biased stretch (low complexity) spans alanine 194–proline 210. The span at leucine 211 to proline 249 shows a compositional bias: pro residues. Repeat copies occupy residues alanine 218–proline 225, alanine 226–proline 233, alanine 240–proline 247, alanine 248–proline 255, alanine 274–proline 281, alanine 287–proline 294, alanine 295–proline 302, alanine 303–proline 310, alanine 311–proline 318, and glutamine 353–proline 359. Low complexity predominate over residues alanine 274–alanine 292. 2 stretches are compositionally biased toward pro residues: residues proline 293–proline 312 and proline 350–glycine 361.

It belongs to the transglycosylase family. Rpf subfamily.

In terms of biological role, factor that stimulates resuscitation of dormant cells. Has peptidoglycan (PG) hydrolytic activity. The polypeptide is Resuscitation-promoting factor RpfA (rpfA) (Mycobacterium tuberculosis (strain CDC 1551 / Oshkosh)).